The primary structure comprises 163 residues: MDDMLTKIQERTKCLIYILMERQIRAARLEQLLLDYISCKPHDKLCKSSMEGFTTERSLKYTRDCPQYAAVTTSQPRYRIEKRSKRFPKTAQMELENWYTENEDNPYLSKRDLQQLVHKTGLCAPQVRNWVSNRRRKERTLTISKELSDLLNQDTRCSPNDVV.

The homeobox; TALE-type DNA-binding region spans 80–142 (IEKRSKRFPK…NRRRKERTLT (63 aa)).

It belongs to the TALE/M-ATYP homeobox family.

Its subcellular location is the nucleus. Mating type proteins are sequence specific DNA-binding proteins that act as master switches in yeast differentiation by controlling gene expression in a cell type-specific fashion. The sequence is that of Mating-type protein ALPHA2 (MATALPHA2) from Pichia angusta (Yeast).